Reading from the N-terminus, the 459-residue chain is Exodeoxyribonuclease 7 large subunit (459 aa).

Belongs to the XseA family. In terms of assembly, heterooligomer composed of large and small subunits.

It is found in the cytoplasm. The catalysed reaction is Exonucleolytic cleavage in either 5'- to 3'- or 3'- to 5'-direction to yield nucleoside 5'-phosphates.. Bidirectionally degrades single-stranded DNA into large acid-insoluble oligonucleotides, which are then degraded further into small acid-soluble oligonucleotides. The protein is Exodeoxyribonuclease 7 large subunit of Pseudomonas putida (strain ATCC 47054 / DSM 6125 / CFBP 8728 / NCIMB 11950 / KT2440).